The sequence spans 53 residues: Small ribosomal subunit protein uS14 (53 aa).

The Zn(2+) site is built by cysteine 17, cysteine 20, cysteine 36, and cysteine 39.

This sequence belongs to the universal ribosomal protein uS14 family. Zinc-binding uS14 subfamily. As to quaternary structure, part of the 30S ribosomal subunit. The cofactor is Zn(2+).

Binds 16S rRNA, required for the assembly of 30S particles. This chain is Small ribosomal subunit protein uS14, found in Methanocaldococcus jannaschii (strain ATCC 43067 / DSM 2661 / JAL-1 / JCM 10045 / NBRC 100440) (Methanococcus jannaschii).